The chain runs to 109 residues: U4-lycotoxin-Ls1c (109 aa).

The signal sequence occupies residues 1–22; the sequence is MKVLVLFSVLFLTLFSYSSTEA. Positions 23 to 44 are excised as a propeptide; it reads IDEFDSDAEDDMLSLMANEQVR. A knottin domain region spans residues 45–88; it reads AKACTPRLHDCSHDRHSCCRGELFKDVCYCFYPEGEDITEVCSC. 4 disulfide bridges follow: C48–C63, C55–C72, C62–C88, and C74–C86. A linear cationic cytotoxin domain region spans residues 89–108; that stretch reads QQPKSHKYIEKVVDKAKTVV.

This sequence belongs to the neurotoxin 19 (CSTX) family. 05 (U4-Lctx) subfamily. Expressed by the venom gland.

It is found in the secreted. Enhances the high-affinity desensitization of human P2RX3 purinoceptors. The chain is U4-lycotoxin-Ls1c from Lycosa singoriensis (Wolf spider).